Consider the following 184-residue polypeptide: Peptide deformylase (184 aa).

Fe cation-binding residues include C96 and H138. E139 is a catalytic residue. H142 provides a ligand contact to Fe cation.

Belongs to the polypeptide deformylase family. It depends on Fe(2+) as a cofactor.

The catalysed reaction is N-terminal N-formyl-L-methionyl-[peptide] + H2O = N-terminal L-methionyl-[peptide] + formate. In terms of biological role, removes the formyl group from the N-terminal Met of newly synthesized proteins. Requires at least a dipeptide for an efficient rate of reaction. N-terminal L-methionine is a prerequisite for activity but the enzyme has broad specificity at other positions. The protein is Peptide deformylase of Cytophaga hutchinsonii (strain ATCC 33406 / DSM 1761 / CIP 103989 / NBRC 15051 / NCIMB 9469 / D465).